The primary structure comprises 583 residues: Potassium-transporting ATPase potassium-binding subunit (583 aa).

The next 10 membrane-spanning stretches (helical) occupy residues 3 to 23 (NIIW…WPLG), 66 to 86 (MACV…LLMA), 135 to 155 (GLTV…FALI), 177 to 197 (VLYI…EQGV), 266 to 286 (LEML…GAKI), 293 to 313 (VAIF…TVQA), 402 to 422 (GLYG…LMVG), 440 to 460 (AVVV…LMCL), 506 to 526 (VLLG…ILAM), and 549 to 569 (LFIF…FFPA).

This sequence belongs to the KdpA family. In terms of assembly, the system is composed of three essential subunits: KdpA, KdpB and KdpC.

The protein localises to the cell inner membrane. In terms of biological role, part of the high-affinity ATP-driven potassium transport (or Kdp) system, which catalyzes the hydrolysis of ATP coupled with the electrogenic transport of potassium into the cytoplasm. This subunit binds the periplasmic potassium ions and delivers the ions to the membrane domain of KdpB through an intramembrane tunnel. The sequence is that of Potassium-transporting ATPase potassium-binding subunit from Desulfovibrio desulfuricans (strain ATCC 27774 / DSM 6949 / MB).